The sequence spans 289 residues: SAGA-associated factor 29kDa (289 aa).

Positions 9–36 (AQQIQDRLKDIQQNIHNVDEERRRAENS) form a coiled coil. Positions 137–278 (GNYVAKVGDN…VIAYRPTKKG (142 aa)) constitute an SGF29 C-terminal domain. Histone H3K4me3 N-terminus binding stretches follow at residues 179–181 (DID) and 225–228 (QTTC). Residues 249–251 (FED) are histone H3K4me3 binding.

Belongs to the SGF29 family. In terms of assembly, component of the Spt-Ada-Gcn5 acetyltransferase (SAGA) complex consisting of wda/Taf5L, Saf6, Taf9, Taf10b, Taf12, Ada1, Spt3, Spt7, Spt20, Sf3b3, Sf3b5, Nipped-A/Tra1, a histone acetyltransferase (HAT) module made up of Gcn5, Ada2b (Isoform B), Ada3 and Sgf29, and a deubiquitinase (DUB) module made up of not/nonstop, Sgf11, Atxn7 and e(y)2. Component of the Chiffon histone acetyltransferase (CHAT) complex consisting of Ada3, Sgf29, Gcn5, chif/chiffon and Ada2b (Isoform A).

It localises to the nucleus. Component of both the SAGA and CHAT histone acetyltransferase complexes, which both predominantly acetylate histone H3. The polypeptide is SAGA-associated factor 29kDa (Drosophila melanogaster (Fruit fly)).